The primary structure comprises 363 residues: Chorismate synthase (363 aa).

Arg-48 contributes to the NADP(+) binding site. FMN is bound by residues 125–127 (RSS), 238–239 (NA), Gly-278, 293–297 (KPTAS), and Arg-319.

Belongs to the chorismate synthase family. Homotetramer. FMNH2 is required as a cofactor.

It catalyses the reaction 5-O-(1-carboxyvinyl)-3-phosphoshikimate = chorismate + phosphate. Its pathway is metabolic intermediate biosynthesis; chorismate biosynthesis; chorismate from D-erythrose 4-phosphate and phosphoenolpyruvate: step 7/7. Functionally, catalyzes the anti-1,4-elimination of the C-3 phosphate and the C-6 proR hydrogen from 5-enolpyruvylshikimate-3-phosphate (EPSP) to yield chorismate, which is the branch point compound that serves as the starting substrate for the three terminal pathways of aromatic amino acid biosynthesis. This reaction introduces a second double bond into the aromatic ring system. The sequence is that of Chorismate synthase from Acinetobacter baylyi (strain ATCC 33305 / BD413 / ADP1).